The sequence spans 292 residues: Malonyl-[acyl-carrier protein] O-methyltransferase (292 aa).

It belongs to the methyltransferase superfamily.

It carries out the reaction malonyl-[ACP] + S-adenosyl-L-methionine = malonyl-[ACP] methyl ester + S-adenosyl-L-homocysteine. It participates in cofactor biosynthesis; biotin biosynthesis. In terms of biological role, converts the free carboxyl group of a malonyl-thioester to its methyl ester by transfer of a methyl group from S-adenosyl-L-methionine (SAM). It allows to synthesize pimeloyl-ACP via the fatty acid synthetic pathway. The polypeptide is Malonyl-[acyl-carrier protein] O-methyltransferase (Alcanivorax borkumensis (strain ATCC 700651 / DSM 11573 / NCIMB 13689 / SK2)).